The following is a 358-amino-acid chain: Probable branched-chain-amino-acid aminotransferase (358 aa).

The residue at position 196 (Lys196) is an N6-(pyridoxal phosphate)lysine.

Belongs to the class-IV pyridoxal-phosphate-dependent aminotransferase family. The cofactor is pyridoxal 5'-phosphate.

The catalysed reaction is L-leucine + 2-oxoglutarate = 4-methyl-2-oxopentanoate + L-glutamate. It catalyses the reaction L-isoleucine + 2-oxoglutarate = (S)-3-methyl-2-oxopentanoate + L-glutamate. The enzyme catalyses L-valine + 2-oxoglutarate = 3-methyl-2-oxobutanoate + L-glutamate. It participates in amino-acid biosynthesis; L-isoleucine biosynthesis; L-isoleucine from 2-oxobutanoate: step 4/4. Its pathway is amino-acid biosynthesis; L-leucine biosynthesis; L-leucine from 3-methyl-2-oxobutanoate: step 4/4. The protein operates within amino-acid biosynthesis; L-valine biosynthesis; L-valine from pyruvate: step 4/4. In terms of biological role, acts on leucine, isoleucine and valine. This Staphylococcus epidermidis (strain ATCC 35984 / DSM 28319 / BCRC 17069 / CCUG 31568 / BM 3577 / RP62A) protein is Probable branched-chain-amino-acid aminotransferase (ilvE).